Reading from the N-terminus, the 201-residue chain is Large ribosomal subunit protein eL15A (201 aa).

Residues 161 to 182 are disordered; that stretch reads SRGLTSIGKKSRGIGKGHRFNN. Over residues 169 to 179 the composition is skewed to basic residues; sequence KKSRGIGKGHR.

The protein belongs to the eukaryotic ribosomal protein eL15 family. Component of the large ribosomal subunit (LSU). Mature yeast ribosomes consist of a small (40S) and a large (60S) subunit. The 40S small subunit contains 1 molecule of ribosomal RNA (18S rRNA) and at least 33 different proteins. The large 60S subunit contains 3 rRNA molecules (25S, 5.8S and 5S rRNA) and at least 46 different proteins.

Its subcellular location is the cytoplasm. It localises to the nucleus. The protein localises to the nucleolus. Its function is as follows. Component of the ribosome, a large ribonucleoprotein complex responsible for the synthesis of proteins in the cell. The small ribosomal subunit (SSU) binds messenger RNAs (mRNAs) and translates the encoded message by selecting cognate aminoacyl-transfer RNA (tRNA) molecules. The large subunit (LSU) contains the ribosomal catalytic site termed the peptidyl transferase center (PTC), which catalyzes the formation of peptide bonds, thereby polymerizing the amino acids delivered by tRNAs into a polypeptide chain. The nascent polypeptides leave the ribosome through a tunnel in the LSU and interact with protein factors that function in enzymatic processing, targeting, and the membrane insertion of nascent chains at the exit of the ribosomal tunnel. This Schizosaccharomyces pombe (strain 972 / ATCC 24843) (Fission yeast) protein is Large ribosomal subunit protein eL15A (rpl15).